The primary structure comprises 151 residues: uncharacterized protein (151 aa).

One can recognise a KilA-N domain in the interval Asn-11 to Tyr-118.

This is an uncharacterized protein from Fowlpox virus (strain NVSL) (FPV).